The primary structure comprises 457 residues: Ribulose bisphosphate carboxylase-like protein (457 aa).

K199, D201, and E202 together coordinate Mg(2+). The residue at position 199 (K199) is an N6-carboxylysine. A disordered region spans residues 426 to 457 (AIAAFGKPAHGQAASPQPSEQASEPDAAGGDS).

The protein belongs to the RuBisCO large chain family. Type IV subfamily. The cofactor is Mg(2+).

Its function is as follows. May be involved in sulfur metabolism and oxidative stress response. Does not show RuBisCO activity. The chain is Ribulose bisphosphate carboxylase-like protein from Allochromatium vinosum (strain ATCC 17899 / DSM 180 / NBRC 103801 / NCIMB 10441 / D) (Chromatium vinosum).